The primary structure comprises 241 residues: Leucyl/phenylalanyl-tRNA--protein transferase (241 aa).

The protein belongs to the L/F-transferase family.

It localises to the cytoplasm. It catalyses the reaction N-terminal L-lysyl-[protein] + L-leucyl-tRNA(Leu) = N-terminal L-leucyl-L-lysyl-[protein] + tRNA(Leu) + H(+). The catalysed reaction is N-terminal L-arginyl-[protein] + L-leucyl-tRNA(Leu) = N-terminal L-leucyl-L-arginyl-[protein] + tRNA(Leu) + H(+). The enzyme catalyses L-phenylalanyl-tRNA(Phe) + an N-terminal L-alpha-aminoacyl-[protein] = an N-terminal L-phenylalanyl-L-alpha-aminoacyl-[protein] + tRNA(Phe). Functions in the N-end rule pathway of protein degradation where it conjugates Leu, Phe and, less efficiently, Met from aminoacyl-tRNAs to the N-termini of proteins containing an N-terminal arginine or lysine. This chain is Leucyl/phenylalanyl-tRNA--protein transferase, found in Neisseria meningitidis serogroup B (strain ATCC BAA-335 / MC58).